The chain runs to 515 residues: Galactokinase (515 aa).

Alpha-D-galactose-binding residues include Arg48, Asp54, His55, and Asp57. Positions 155, 157, 159, and 160 each coordinate ATP. Residue Asp205 coordinates alpha-D-galactose. Residue Asp205 is the Proton acceptor of the active site. ATP contacts are provided by Ser249, Asn250, and Lys251. Tyr259 lines the alpha-D-galactose pocket.

This sequence belongs to the GHMP kinase family. GalK subfamily.

It catalyses the reaction alpha-D-galactose + ATP = alpha-D-galactose 1-phosphate + ADP + H(+). It functions in the pathway carbohydrate metabolism; galactose metabolism. Its function is as follows. Galactokinase is a key enzyme in the galactose metabolism where it catalyzes the conversion of alpha-D-galactose to galactose 1-phosphate. Can also induce the transcription of the gal genes in response to the organism being challenged with galactose as the sole source of carbon. The protein is Galactokinase of Candida albicans (Yeast).